A 461-amino-acid polypeptide reads, in one-letter code: General transcription factor IIH subunit 2 (461 aa).

Residues methionine 1 to lysine 13 are compositionally biased toward polar residues. Disordered stretches follow at residues methionine 1 to glycine 37 and leucine 61 to glycine 83. A compositionally biased stretch (basic and acidic residues) spans leucine 61–threonine 71. The VWFA domain maps to histidine 98–proline 275. A C4-type zinc finger spans residues cysteine 315–cysteine 332. Low complexity predominate over residues threonine 423 to glycine 447. Residues threonine 423–histidine 461 are disordered. The 13 X 2 tandem repeat of N-[GE] stretch occupies residues asparagine 434–glycine 459. Over residues asparagine 448–histidine 461 the composition is skewed to gly residues.

This sequence belongs to the GTF2H2 family. As to quaternary structure, component of the 7-subunit TFIIH core complex composed of XPB/repB, XPD/repD, gtf2h1, gtf2h2, gtf2h3, gtf2h4 and gtf2h5, which is active in NER. The core complex associates with the 3-subunit CDK-activating kinase (CAK) module composed of cycH/cyclin H, cdk7 and mnat1 to form the 10-subunit holoenzyme (holo-TFIIH) active in transcription.

The protein localises to the nucleus. Component of the general transcription and DNA repair factor IIH (TFIIH) core complex, which is involved in general and transcription-coupled nucleotide excision repair (NER) of damaged DNA and, when complexed to CAK, in RNA transcription by RNA polymerase II. In NER, TFIIH acts by opening DNA around the lesion to allow the excision of the damaged oligonucleotide and its replacement by a new DNA fragment. In transcription, TFIIH has an essential role in transcription initiation. When the pre-initiation complex (PIC) has been established, TFIIH is required for promoter opening and promoter escape. Phosphorylation of the C-terminal tail (CTD) of the largest subunit of RNA polymerase II by the kinase module CAK controls the initiation of transcription. In Dictyostelium discoideum (Social amoeba), this protein is General transcription factor IIH subunit 2 (gtf2h2).